A 175-amino-acid chain; its full sequence is Transcriptional repressor NrdR (175 aa).

The segment at 3-32 is a zinc-finger region; sequence CPYCSHPDTKVIDSRDVDDGVRRRRECVVC. An ATP-cone domain is found at 47 to 137; it reads LFVVKKDQRR…VYREFTDITQ (91 aa).

The protein belongs to the NrdR family. Zn(2+) is required as a cofactor.

Negatively regulates transcription of bacterial ribonucleotide reductase nrd genes and operons by binding to NrdR-boxes. The protein is Transcriptional repressor NrdR of Dehalococcoides mccartyi (strain ATCC BAA-2266 / KCTC 15142 / 195) (Dehalococcoides ethenogenes (strain 195)).